Reading from the N-terminus, the 125-residue chain is Glycine cleavage system H protein (125 aa).

Positions 19 to 101 constitute a Lipoyl-binding domain; that stretch reads GAVVGITDFA…NGSGWFFKLT (83 aa). Lysine 60 bears the N6-lipoyllysine mark.

Belongs to the GcvH family. As to quaternary structure, the glycine cleavage system is composed of four proteins: P, T, L and H. The cofactor is (R)-lipoate.

The glycine cleavage system catalyzes the degradation of glycine. The H protein shuttles the methylamine group of glycine from the P protein to the T protein. This is Glycine cleavage system H protein from Methylocella silvestris (strain DSM 15510 / CIP 108128 / LMG 27833 / NCIMB 13906 / BL2).